A 559-amino-acid chain; its full sequence is Dihydroxy-acid dehydratase 2 (559 aa).

Cysteine 53 contributes to the [2Fe-2S] cluster binding site. Position 85 (aspartate 85) interacts with Mg(2+). Cysteine 126 lines the [2Fe-2S] cluster pocket. The Mg(2+) site is built by aspartate 127 and lysine 128. Residue lysine 128 is modified to N6-carboxylysine. [2Fe-2S] cluster is bound at residue cysteine 195. Glutamate 446 is a binding site for Mg(2+). Serine 472 (proton acceptor) is an active-site residue.

The protein belongs to the IlvD/Edd family. As to quaternary structure, homodimer. [2Fe-2S] cluster is required as a cofactor. Requires Mg(2+) as cofactor.

It carries out the reaction (2R)-2,3-dihydroxy-3-methylbutanoate = 3-methyl-2-oxobutanoate + H2O. The enzyme catalyses (2R,3R)-2,3-dihydroxy-3-methylpentanoate = (S)-3-methyl-2-oxopentanoate + H2O. The protein operates within amino-acid biosynthesis; L-isoleucine biosynthesis; L-isoleucine from 2-oxobutanoate: step 3/4. It participates in amino-acid biosynthesis; L-valine biosynthesis; L-valine from pyruvate: step 3/4. Its function is as follows. Functions in the biosynthesis of branched-chain amino acids. Catalyzes the dehydration of (2R,3R)-2,3-dihydroxy-3-methylpentanoate (2,3-dihydroxy-3-methylvalerate) into 2-oxo-3-methylpentanoate (2-oxo-3-methylvalerate) and of (2R)-2,3-dihydroxy-3-methylbutanoate (2,3-dihydroxyisovalerate) into 2-oxo-3-methylbutanoate (2-oxoisovalerate), the penultimate precursor to L-isoleucine and L-valine, respectively. This is Dihydroxy-acid dehydratase 2 from Pseudoalteromonas translucida (strain TAC 125).